The following is a 787-amino-acid chain: MRTRRPGQLWATLLALGALAGVVVGESNICTTRGVNSCQQCLAVSPVCAWCSDESLPQNSPRCNLKKNLLKDKCSPESIEFPVSEAQILEALPLSSKGSGDSAQITQVSPQRIALRLRPDDSKIFSLQVRQVEDYPVDIYYLMDLSFSMKDDLSSIQTLGTKLASQMRKLTSNLRIGFGAFVDKPVSPYMFISPPQAIKNPCYTMKSTCLPMFGYKHVLTLTDQVTRFNDEVKKQSVSRNRDAPEGGFDAIMQATVCDEKIGWRNDASHLLVFTTDAKTHIALDGRLAGIVLPNDGRCHIGPDNHYSASTTMDYPSLGLMTEKLSQKNINLIFAVTENVVSLYQNYSELIPGTTVGVLSDDSSNVLQLIVDAYGKIRSKVELEVRDLPEELSLSFNATCLNNEVIPGLKSCVGLKIGDTVSFSIEAKVRGCPQQKEQSFTIKPVGFKDSLTVQVTFDCDCDCQAFAQPLSPRCNNGNGTFECGVCRCDQGWLGSMCECSEEDYRPSQQEECSPKEGQPICSQRGECLCGQCVCHSSDFGKITGKYCECDDFSCVRYKGEMCSGHGQCNCGDCVCDSDWTGYYCNCTTRTDTCMSTNGLLCSGRGNCECGSCVCVQPGSYGDTCEKCPTCPDACSFKKDCVECKKFNRGKLHEENNCNRFCRDDIELVKELTDTGKNAVNCTYKNEDDCVVRFQYYEDSSGRAVLYVVEEPECPKGPDILVVLLSVMGAILLIGLATLLIWKLLITIHDRKEFAKFEEERARAKWDTANNPLYKEATSTFTNITYRGT.

The N-terminal stretch at Met1–Gly25 is a signal peptide. Residues Ser27–Asp717 lie on the Extracellular side of the membrane. One can recognise a PSI domain in the interval Ile29–Ser75. Cystine bridges form between Cys30–Cys48, Cys38–Cys460, Cys41–Cys63, Cys51–Cys74, Cys202–Cys209, Cys257–Cys298, Cys399–Cys411, Cys431–Cys458, Cys462–Cys482, Cys473–Cys485, Cys487–Cys496, Cys498–Cys528, Cys511–Cys526, Cys520–Cys531, Cys533–Cys546, Cys548–Cys569, Cys553–Cys567, Cys561–Cys572, and Cys574–Cys583. One can recognise a VWFA domain in the interval Asp134–Ile376. Residues Ser146 and Ser148 each coordinate Mg(2+). Residues Ser148, Asp151, Asp152, and Asp183 each contribute to the Ca(2+) site. The tract at residues Cys202–Cys209 is CX3CL1-binding. The tract at residues Cys202 to Cys209 is involved in CX3CL1-, NRG1-, FGF1- and IGF1-binding. Asn240, Asp242, Pro244, Glu245, and Asp276 together coordinate Ca(2+). Glu245 contributes to the Mg(2+) binding site. The tract at residues Leu292–Met312 is CX3CL1-binding. 2 N-linked (GlcNAc...) asparagine glycosylation sites follow: Asn345 and Asn396. I-EGF domains follow at residues Cys462–Glu497, Cys498–Glu547, Cys548–Asn584, and Cys585–Glu624. Asn477 carries N-linked (GlcNAc...) asparagine glycosylation. Asn584 is a glycosylation site (N-linked (GlcNAc...) asparagine). 9 disulfides stabilise this stretch: Cys585–Cys608, Cys592–Cys606, Cys600–Cys611, Cys613–Cys623, Cys626–Cys629, Cys633–Cys680, Cys639–Cys660, Cys642–Cys656, and Cys688–Cys712. N-linked (GlcNAc...) asparagine glycosylation is present at Asn679. Residues Ile718–Leu738 traverse the membrane as a helical segment. Topologically, residues Ile739 to Thr787 are cytoplasmic. The residue at position 766 (Thr766) is a Phosphothreonine. Tyr772 bears the Phosphotyrosine mark. The LIR motif lies at Thr776–Ile782. Thr778 is modified (phosphothreonine). Residue Tyr784 is modified to Phosphotyrosine.

This sequence belongs to the integrin beta chain family. Heterodimer of an alpha and a beta subunit. Beta-3 (ITGB3) associates with either alpha-IIB (ITGA2B) or alpha-V (ITGAV). Interacts with FLNB and COMP. Interacts with PDIA6 following platelet stimulation. Interacts with SYK; upon activation by ITGB3 promotes platelet adhesion. Interacts with MYO10. Interacts with DAB2. Interacts with FERMT2. Integrin ITGAV:ITGB3 interacts with FBLN5 (via N-terminus). Interacts with EMP2; regulates the levels of the heterodimer ITGA5:ITGB3 integrin expression on the plasma membrane. ITGAV:ITGB3 interacts with CCN3. ITGAV:ITGB3 and ITGA2B:ITGB3 interact with SELP (via C-type lectin domain); the interaction mediates cell-cell interaction and adhesion. ITGAV:ITGB3 interacts with AGRA2. ITGAV:ITGB3 is found in a ternary complex with CX3CR1 and CX3CL1. ITGAV:ITGB3 is found in a ternary complex with NRG1 and ERBB3. ITGAV:ITGB3 is found in a ternary complex with FGF1 and FGFR1. ITGAV:ITGB3 interacts with FGF2; it is likely that FGF2 can simultaneously bind ITGAV:ITGB3 and FGF receptors. ITGAV:ITGB3 binds to IL1B. ITGAV:ITGB3 is found in a ternary complex with IGF1 and IGF1R. ITGAV:ITGB3 interacts with IGF2. ITGAV:ITGB3 interacts with FBN1. ITGAV:ITGB3 interacts with CD9, CD81 and CD151 (via second extracellular domain). Interacts (via the allosteric site (site 2)) with CXCL12 in a CXCR4-independent manner. Interacts with MXRA8/DICAM; the interaction inhibits ITGAV:ITGB3 heterodimer formation. ITGAV:ITGB3 interacts with PTN. Forms a complex with PTPRZ1 and PTN that stimulates endothelial cell migration through ITGB3 Tyr-772 phosphorylation. ITGAV:ITGB3 interacts with SLC6A4. Interacts with SLC6A4 (via C-terminus); this interaction regulates SLC6A4 trafficking. ITGA2B:ITGB3 interacts with PPIA/CYPA; the interaction is ROS and PPIase activity-dependent and is increased in the presence of thrombin. Interacts with tensin TNS3; TNS3 also interacts with PEAK1, thus acting as an adapter molecule to bridge the association of PEAK1 with ITGB3. Interacts with TM4SF19. In terms of processing, phosphorylated on tyrosine residues in response to thrombin-induced platelet aggregation. Probably involved in outside-in signaling.

It is found in the cell membrane. The protein resides in the cell projection. The protein localises to the lamellipodium membrane. It localises to the cell junction. Its subcellular location is the focal adhesion. It is found in the postsynaptic cell membrane. The protein resides in the synapse. In terms of biological role, integrin alpha-V/beta-3 (ITGAV:ITGB3) is a receptor for cytotactin, fibronectin, laminin, matrix metalloproteinase-2, osteopontin, osteomodulin, prothrombin, thrombospondin, vitronectin and von Willebrand factor. Integrin alpha-IIB/beta-3 (ITGA2B:ITGB3) is a receptor for fibronectin, fibrinogen, plasminogen, prothrombin, thrombospondin and vitronectin. Integrins alpha-IIB/beta-3 and alpha-V/beta-3 recognize the sequence R-G-D in a wide array of ligands. Integrin alpha-IIB/beta-3 recognizes the sequence H-H-L-G-G-G-A-K-Q-A-G-D-V in fibrinogen gamma chain. Following activation integrin alpha-IIB/beta-3 brings about platelet/platelet interaction through binding of soluble fibrinogen. This step leads to rapid platelet aggregation which physically plugs ruptured endothelial surfaces. Fibrinogen binding enhances SELP expression in activated platelets. ITGAV:ITGB3 binds to fractalkine (CX3CL1) and acts as its coreceptor in CX3CR1-dependent fractalkine signaling. ITGAV:ITGB3 binds to NRG1 (via EGF domain) and this binding is essential for NRG1-ERBB signaling. ITGAV:ITGB3 binds to FGF1 and this binding is essential for FGF1 signaling. ITGAV:ITGB3 binds to FGF2 and this binding is essential for FGF2 signaling. ITGAV:ITGB3 binds to IGF1 and this binding is essential for IGF1 signaling. ITGAV:ITGB3 binds to IGF2 and this binding is essential for IGF2 signaling. ITGAV:ITGB3 binds to IL1B and this binding is essential for IL1B signaling. ITGAV:ITGB3 binds to PLA2G2A via a site (site 2) which is distinct from the classical ligand-binding site (site 1) and this induces integrin conformational changes and enhanced ligand binding to site 1. ITGAV:ITGB3 acts as a receptor for fibrillin-1 (FBN1) and mediates R-G-D-dependent cell adhesion to FBN1. In brain, plays a role in synaptic transmission and plasticity. Involved in the regulation of the serotonin neurotransmission, is required to localize to specific compartments within the synapse the serotonin receptor SLC6A4 and for an appropriate reuptake of serotonin. Controls excitatory synaptic strength by regulating GRIA2-containing AMPAR endocytosis, which affects AMPAR abundance and composition. ITGAV:ITGB3 acts as a receptor for CD40LG. ITGAV:ITGB3 acts as a receptor for IBSP and promotes cell adhesion and migration to IBSP. This is Integrin beta-3 from Rattus norvegicus (Rat).